The primary structure comprises 678 residues: MTKNLLVELGLEEIPAYIVTPAMHQLRDRMATFLTDNRLAFDSIDVFSTPRRLAVRVRGLADQQTDLTEDFKGPAKKIALDADGNFTKAAEGFVRGKGLTTADIEFREIKGEEYVYVTKHEAGQPAKTVLAGIPEVLKAMTFPVSMNWASNKFAYIRPVHTLTVLLDDEALDMDFLDITSGRISRGHRFLGNETEIASADSYEADLRAQFVITDPAERQNMIVEQIKAIEDKHNVTVEIDEDLLNEVLNLVEYPTAFMGSFDTKYLEVPEEVLVTSMKNHQRYFVVRDKAGKLLPNFISVRNGNDQYLDNVIKGNEKVLVARLEDGEFFWREDQKLKIADLVERLKVVTFHEKIGSLYEHMERTKVIAEKLADLAGLSAGEKADVARAADIYKFDLLTGMVGEFDELQGIMGEKYALLAGEKPAVAAAIREHYLPNSAEGELPESKVGAVLALADKFDTLLSFFSVGLIPSGSNDPYALRRATQGIVRILEAFGWEIPLDQLIAELYSLNFASLTYDNQPAVMDFIRARVEKMMDKTIPKDIREAVLASSTFVVRLQLAASSAIFQKAKEADYKEAVENLSRVFNLAEKAEVTAIDEALFENDQEKALAAAVAGLELTEDMAGNLDKLFALSPVIAAFFDNTMVMVDDATVKANRLALLKALADKASAVAVFNLLNSK.

Belongs to the class-II aminoacyl-tRNA synthetase family. Tetramer of two alpha and two beta subunits.

It localises to the cytoplasm. It carries out the reaction tRNA(Gly) + glycine + ATP = glycyl-tRNA(Gly) + AMP + diphosphate. This is Glycine--tRNA ligase beta subunit from Streptococcus suis (strain 98HAH33).